Consider the following 130-residue polypeptide: Small ribosomal subunit protein uS11 (130 aa).

This sequence belongs to the universal ribosomal protein uS11 family. As to quaternary structure, part of the 30S ribosomal subunit. Interacts with proteins S7 and S18. Binds to IF-3.

Located on the platform of the 30S subunit, it bridges several disparate RNA helices of the 16S rRNA. Forms part of the Shine-Dalgarno cleft in the 70S ribosome. This Xanthomonas campestris pv. campestris (strain B100) protein is Small ribosomal subunit protein uS11.